The sequence spans 320 residues: Stress-involved WYL domain-containing regulator (320 aa).

Residues 7-65 (TTGRVVQLLGLLQSRRVWTGEELAERLGVTGRSVRRDIERLRELGYPVHASKGQGGGYQ) enclose the HTH deoR-type domain. The segment at residues 24–43 (WTGEELAERLGVTGRSVRRD) is a DNA-binding region (H-T-H motif). The WYL domain maps to 139–218 (DTAVAPDVLM…SDVRATGTTF (80 aa)). Positions 245-320 (VRYFAPEKVV…MADRLRRAVR (76 aa)) are WCX domain.

As to quaternary structure, homodimer.

In terms of biological role, transcriptional activator. Acts as a transcriptional activator of the MSMEG_1357-56 operon upon genotoxic stress. Controls adjacent genes that belong to the DinB/YfiT-like putative metalloenzymes superfamily by upregulating their expression in response to various genotoxic stress conditions, including exposure to H(2)O(2) or the natural antibiotic zeocin, as well as mitomycin C (MMC), diamide and UVC radiation. Upon genotoxic stress, upregulates two genes encoding proteins of the DinB/YfiT-like putative metalloenzymes superfamily, MSMEG_1357 and MSMEG_1356. Binds different forms of single-stranded DNA (ssDNA) with high affinity, primarily through its characteristic WYL domain. Binds nucleic acids with single-stranded regions, such as polyT 20mer ssDNA, 5' tailed, 3' tailed and fork DNA, but not ssRNA. The chain is Stress-involved WYL domain-containing regulator from Mycolicibacterium smegmatis (strain ATCC 700084 / mc(2)155) (Mycobacterium smegmatis).